The chain runs to 717 residues: Fatty acid oxidation complex subunit alpha (717 aa).

An enoyl-CoA hydratase/isomerase region spans residues 1 to 190 (MIHAGNAITV…KDGAVDAVVA (190 aa)). A substrate-binding site is contributed by D298. Residues 313-717 (HPVNQAAVLG…MAANNKKFYG (405 aa)) are 3-hydroxyacyl-CoA dehydrogenase. NAD(+) is bound by residues M326, D345, 402–404 (VTE), K409, and S431. H452 (for 3-hydroxyacyl-CoA dehydrogenase activity) is an active-site residue. Residue N455 coordinates NAD(+). N502 lines the substrate pocket.

In the N-terminal section; belongs to the enoyl-CoA hydratase/isomerase family. The protein in the C-terminal section; belongs to the 3-hydroxyacyl-CoA dehydrogenase family. As to quaternary structure, heterotetramer of two alpha chains (FadB) and two beta chains (FadA).

It carries out the reaction a (3S)-3-hydroxyacyl-CoA + NAD(+) = a 3-oxoacyl-CoA + NADH + H(+). The enzyme catalyses a (3S)-3-hydroxyacyl-CoA = a (2E)-enoyl-CoA + H2O. The catalysed reaction is a 4-saturated-(3S)-3-hydroxyacyl-CoA = a (3E)-enoyl-CoA + H2O. It catalyses the reaction (3S)-3-hydroxybutanoyl-CoA = (3R)-3-hydroxybutanoyl-CoA. It carries out the reaction a (3Z)-enoyl-CoA = a 4-saturated (2E)-enoyl-CoA. The enzyme catalyses a (3E)-enoyl-CoA = a 4-saturated (2E)-enoyl-CoA. It participates in lipid metabolism; fatty acid beta-oxidation. Its function is as follows. Involved in the aerobic and anaerobic degradation of long-chain fatty acids via beta-oxidation cycle. Catalyzes the formation of 3-oxoacyl-CoA from enoyl-CoA via L-3-hydroxyacyl-CoA. It can also use D-3-hydroxyacyl-CoA and cis-3-enoyl-CoA as substrate. The polypeptide is Fatty acid oxidation complex subunit alpha (Acinetobacter baumannii (strain ACICU)).